Consider the following 432-residue polypeptide: MTSASTEPFFNRSLADTDPEIFGAIGKELGRQRHEIELIASENIVSRAVLEAQGSIMTNKYAEGYPGKRYYGGCQYVDIAEELAIERAKKLFGVNFANVQPNSGSQMNQAVFLALLQPGDTFMGLDLNSGGHLTHGSPVNMSGKWFNVVSYGVREGDNLLDMEAVQRKAEETKPKLIIAGGTAYSRIWDWKRFREIADSVGAYLMVDMAHIAGLVAGGQHPSPFPHCHVATTTTHKSLRGPRGGMILTNDEDLAKKFNSAVFPGLQGGPLMHVIAAKAVALGEALQPEFQDYAAQIVKNAKALSETLISGGVDVVSGGTDNHLMLVDLRKKNATGKRAEAALGRAYVTCNKNGIPFDPEKPFVTSGVRLGTPAGTTRGFKEAEFREIGNLIIEVLDGLKVANSDEGNAAVEAAVREKVIKLTDRFPMYGYMG.

(6S)-5,6,7,8-tetrahydrofolate contacts are provided by residues Leu-127 and 131 to 133 (GHL). At Lys-236 the chain carries N6-(pyridoxal phosphate)lysine.

It belongs to the SHMT family. In terms of assembly, homodimer. It depends on pyridoxal 5'-phosphate as a cofactor.

Its subcellular location is the cytoplasm. It catalyses the reaction (6R)-5,10-methylene-5,6,7,8-tetrahydrofolate + glycine + H2O = (6S)-5,6,7,8-tetrahydrofolate + L-serine. It participates in one-carbon metabolism; tetrahydrofolate interconversion. The protein operates within amino-acid biosynthesis; glycine biosynthesis; glycine from L-serine: step 1/1. Functionally, catalyzes the reversible interconversion of serine and glycine with tetrahydrofolate (THF) serving as the one-carbon carrier. This reaction serves as the major source of one-carbon groups required for the biosynthesis of purines, thymidylate, methionine, and other important biomolecules. Also exhibits THF-independent aldolase activity toward beta-hydroxyamino acids, producing glycine and aldehydes, via a retro-aldol mechanism. The chain is Serine hydroxymethyltransferase from Rhizobium rhizogenes (strain K84 / ATCC BAA-868) (Agrobacterium radiobacter).